A 266-amino-acid chain; its full sequence is Undecaprenyl-diphosphatase (266 aa).

A run of 8 helical transmembrane segments spans residues 1–21 (MDTFQVIILALIQGLTEFLPI), 39–59 (QGLSFDVAVNTGSLFAVVIYF), 87–107 (WWIILATLPAVFFGFIAKDFI), 111–131 (LRSAGVIAVTTIVFGLLLWWA), 149–169 (ALLIGFAQALALIPGTSRSGA), 183–203 (AAARFSFLMSVPVSLGAAILV), 218–238 (ALTLGTVISFVAAYLCIHYFL), and 246–266 (MTPFVIYRLILGAVLCGFIFL).

The protein belongs to the UppP family.

Its subcellular location is the cell inner membrane. It carries out the reaction di-trans,octa-cis-undecaprenyl diphosphate + H2O = di-trans,octa-cis-undecaprenyl phosphate + phosphate + H(+). Its function is as follows. Catalyzes the dephosphorylation of undecaprenyl diphosphate (UPP). Confers resistance to bacitracin. The protein is Undecaprenyl-diphosphatase of Shewanella sp. (strain MR-4).